Here is a 191-residue protein sequence, read N- to C-terminus: Putative glutathione-dependent formaldehyde-activating enzyme (191 aa).

A CENP-V/GFA domain is found at 20–166 (FAGGKLRCHC…FKALGLQTYD (147 aa)). C27, C29, C48, C50, C53, C95, and C98 together coordinate Zn(2+).

This sequence belongs to the Gfa family. It depends on Zn(2+) as a cofactor.

It carries out the reaction S-(hydroxymethyl)glutathione = glutathione + formaldehyde. It participates in one-carbon metabolism; formaldehyde degradation; formate from formaldehyde (glutathione route): step 1/3. Its function is as follows. Catalyzes the condensation of formaldehyde and glutathione to S-hydroxymethylglutathione. This Penicillium rubens (strain ATCC 28089 / DSM 1075 / NRRL 1951 / Wisconsin 54-1255) (Penicillium chrysogenum) protein is Putative glutathione-dependent formaldehyde-activating enzyme.